The primary structure comprises 696 residues: Elongation factor G (696 aa).

The tr-type G domain maps to 8 to 282 (KDYRNIGIMA…AVVDYLPSPL (275 aa)). Residues 17–24 (AHIDAGKT), 81–85 (DTPGH), and 135–138 (NKMD) each bind GTP.

Belongs to the TRAFAC class translation factor GTPase superfamily. Classic translation factor GTPase family. EF-G/EF-2 subfamily.

Its subcellular location is the cytoplasm. In terms of biological role, catalyzes the GTP-dependent ribosomal translocation step during translation elongation. During this step, the ribosome changes from the pre-translocational (PRE) to the post-translocational (POST) state as the newly formed A-site-bound peptidyl-tRNA and P-site-bound deacylated tRNA move to the P and E sites, respectively. Catalyzes the coordinated movement of the two tRNA molecules, the mRNA and conformational changes in the ribosome. This is Elongation factor G from Mycoplasmopsis synoviae (strain 53) (Mycoplasma synoviae).